We begin with the raw amino-acid sequence, 275 residues long: NH(3)-dependent NAD(+) synthetase (275 aa).

46–53 (GISGGQDS) is an ATP binding site. D52 provides a ligand contact to Mg(2+). Residue R140 participates in deamido-NAD(+) binding. T160 provides a ligand contact to ATP. E165 serves as a coordination point for Mg(2+). K173 and D180 together coordinate deamido-NAD(+). Positions 189 and 211 each coordinate ATP. 260–261 (HK) contributes to the deamido-NAD(+) binding site.

It belongs to the NAD synthetase family. As to quaternary structure, homodimer.

The enzyme catalyses deamido-NAD(+) + NH4(+) + ATP = AMP + diphosphate + NAD(+) + H(+). It participates in cofactor biosynthesis; NAD(+) biosynthesis; NAD(+) from deamido-NAD(+) (ammonia route): step 1/1. Functionally, catalyzes the ATP-dependent amidation of deamido-NAD to form NAD. Uses ammonia as a nitrogen source. The chain is NH(3)-dependent NAD(+) synthetase from Escherichia coli O45:K1 (strain S88 / ExPEC).